Consider the following 249-residue polypeptide: Urease accessory protein UreG (249 aa).

Over residues 1-13 (MHLGHEEFQRTDG) the composition is skewed to basic and acidic residues. The interval 1-34 (MHLGHEEFQRTDGRASTGPADAGPAGAGRAPRIG) is disordered. Over residues 18 to 33 (GPADAGPAGAGRAPRI) the composition is skewed to low complexity. 37–44 (GPVGSGKT) contributes to the GTP binding site. Residues 229–249 (PRGGSYDASDASNASQPLNRM) are disordered. Polar residues predominate over residues 238–249 (DASNASQPLNRM).

The protein belongs to the SIMIBI class G3E GTPase family. UreG subfamily. Homodimer. UreD, UreF and UreG form a complex that acts as a GTP-hydrolysis-dependent molecular chaperone, activating the urease apoprotein by helping to assemble the nickel containing metallocenter of UreC. The UreE protein probably delivers the nickel.

It localises to the cytoplasm. In terms of biological role, facilitates the functional incorporation of the urease nickel metallocenter. This process requires GTP hydrolysis, probably effectuated by UreG. In Frankia casuarinae (strain DSM 45818 / CECT 9043 / HFP020203 / CcI3), this protein is Urease accessory protein UreG.